Reading from the N-terminus, the 665-residue chain is Syntabulin (665 aa).

Basic and acidic residues predominate over residues 1-22 (MGPLRESKKEQRVQHQEKEISR). Residues 1 to 271 (MGPLRESKKE…GVKPPNPEQY (271 aa)) are disordered. The interval 2–421 (GPLRESKKEQ…DKLPDGLSLE (420 aa)) is sufficient for interaction with KIF5B. The span at 35–52 (PQQQQQQQNKVSPASESP) shows a compositional bias: low complexity. The residue at position 54 (S54) is a Phosphoserine. Positions 61-77 (FNPSSSGRSARTISSNS) are enriched in low complexity. A compositionally biased stretch (polar residues) spans 85–101 (CPSSQSVSPVKTPSDTG). S111 carries the post-translational modification Phosphoserine. Residues 141 to 162 (GGIIKPGSEADFSSSSSTGSIS) are compositionally biased toward low complexity. Polar residues predominate over residues 168–180 (MSTTGNKRASFSR). The segment covering 225–245 (SYAPSSPSSSNSGSYKGSDCS) has biased composition (low complexity). The stretch at 275–357 (LQQKEVTVRH…MRSSLADKDK (83 aa)) forms a coiled coil. Residues 314-421 (REDWIEEECH…DKLPDGLSLE (108 aa)) form a sufficient for interaction with STX1A region. Phosphoserine is present on residues S400 and S557. Residues 609–629 (FLVDLLAVAAPVVPTVLWAFS) form a helical membrane-spanning segment.

As to quaternary structure, interacts with STX1A and KIF5B.

The protein localises to the golgi apparatus membrane. Part of a kinesin motor-adapter complex that is critical for the anterograde axonal transport of active zone components and contributes to activity-dependent presynaptic assembly during neuronal development. The polypeptide is Syntabulin (Sybu) (Mus musculus (Mouse)).